The sequence spans 463 residues: Trigger factor (463 aa).

Residues 162 to 243 enclose the PPIase FKBP-type domain; it reads GDVVTLDLEA…VSQVAARELP (82 aa). Residues 427–463 form a disordered region; it reads TNGEIVDLDDEDETESTPETTEAAEAAEESTEDKPEA. A compositionally biased stretch (acidic residues) spans 432–442; the sequence is VDLDDEDETES.

Belongs to the FKBP-type PPIase family. Tig subfamily.

It localises to the cytoplasm. It catalyses the reaction [protein]-peptidylproline (omega=180) = [protein]-peptidylproline (omega=0). In terms of biological role, involved in protein export. Acts as a chaperone by maintaining the newly synthesized protein in an open conformation. Functions as a peptidyl-prolyl cis-trans isomerase. This is Trigger factor from Streptomyces avermitilis (strain ATCC 31267 / DSM 46492 / JCM 5070 / NBRC 14893 / NCIMB 12804 / NRRL 8165 / MA-4680).